The chain runs to 193 residues: uncharacterized protein (193 aa).

Residues 1–84 (MTSKCSKWHE…RRSNQRIQLY (84 aa)) form a disordered region. The span at 43-78 (SSPRRSSPRRSPRRSSPRRSSPRRSSPRRSSPRRSN) shows a compositional bias: basic residues.

The protein belongs to the IIV-6 378R family.

This is an uncharacterized protein from Invertebrate iridescent virus 6 (IIV-6).